A 216-amino-acid polypeptide reads, in one-letter code: Pyridoxine/pyridoxamine 5'-phosphate oxidase (216 aa).

Substrate is bound by residues 9-12 and R67; that span reads RLSY. FMN-binding positions include 62–67, 77–78, K84, and Q106; these read RIVLLR and YT. Residues Y124, R128, and S132 each coordinate substrate. Residues 142-143 and W188 contribute to the FMN site; that span reads QS. Residue 194-196 participates in substrate binding; sequence RMH. Position 198 (R198) interacts with FMN.

It belongs to the pyridoxamine 5'-phosphate oxidase family. In terms of assembly, homodimer. The cofactor is FMN.

The enzyme catalyses pyridoxamine 5'-phosphate + O2 + H2O = pyridoxal 5'-phosphate + H2O2 + NH4(+). The catalysed reaction is pyridoxine 5'-phosphate + O2 = pyridoxal 5'-phosphate + H2O2. The protein operates within cofactor metabolism; pyridoxal 5'-phosphate salvage; pyridoxal 5'-phosphate from pyridoxamine 5'-phosphate: step 1/1. It functions in the pathway cofactor metabolism; pyridoxal 5'-phosphate salvage; pyridoxal 5'-phosphate from pyridoxine 5'-phosphate: step 1/1. Functionally, catalyzes the oxidation of either pyridoxine 5'-phosphate (PNP) or pyridoxamine 5'-phosphate (PMP) into pyridoxal 5'-phosphate (PLP). In Psychrobacter arcticus (strain DSM 17307 / VKM B-2377 / 273-4), this protein is Pyridoxine/pyridoxamine 5'-phosphate oxidase.